A 780-amino-acid polypeptide reads, in one-letter code: MASAELQGKYQKLAQEYSKLRAQNQVLKKGVVDEQASSAALKEQLKMKDQSLRKLQQEMDSLTFRNLQLAKRVELLQDELALSEPRGKKNKKSGESSSQLSQEQKSVFDEDLQKKIEENERLHIQFFEADEHHRHVEAELRSRLATLETEAAQHQAVIDGLTRKYMETIEKLQSDKAKLEVKSQTLEKEAKECRLRTEECQLQLKNLHEDLSGRLEESLSIINEKVPFNDTKCHLYNALNVPLHNRRHQLKMRDIAGQALAFVQDLVPALLNFHTYTEQRIQIFPVDSAIDTISPLNQKFSQYLHENASYVRPLEEGMLHLFESITEDTVTVLETTVKLKMFSDHLTSYVRFLRKILPYQLKSLEEECESSLCTPALRARNLELSQDMKTMTAVFEKLQTYVTLLALPSTEPDGLLRTNYTSVLTNVGAALHGFHDVMKDISKHYSQKASIEHEIPTATQKLVTTNDCILSSAVTLTNGAGKIASFFGNNVDYFIASLSYGPKTASGFISPLSAECMLQYKKKAAAYMKSLRTPLAESVPYGEAVANRRVLLSSTESREGLAQQVQQSLEKISKLEQEKEHWMLEAQLAKIKLEKENQRIADRLRGTTSAQLPGLAQENATVPIASSQEEAAAKVLTEPVQSTSLVGMLTRTPDSEAPDVESREDLIKSHYMARIAELTSQLQLADSKSVHFYAECRALSKRLALAEKSKETLTEEMRLASQNISRLQDELMTTKRSYEDQLSMMSDHLCSMNETLSKQREEIDTLKMASKGNSKKTRNR.

Coiled coils occupy residues 1–209 and 556–605; these read MASA…NLHE and ESRE…DRLR. Residues 84-104 are disordered; the sequence is EPRGKKNKKSGESSSQLSQEQ. The span at 95–104 shows a compositional bias: low complexity; the sequence is ESSSQLSQEQ. Thr-652 bears the Phosphothreonine mark. Residues 694-742 are a coiled coil; sequence AECRALSKRLALAEKSKETLTEEMRLASQNISRLQDELMTTKRSYEDQL.

In terms of assembly, component of the FERRY complex, composed of five subunits: TBCK, PPP1R21, FERRY3, CRYZL1 and GATAD1, with a ratio of 1:2:1:2:4 respectively. PPP1R21 serves as a binding hub connecting all five complex subunits to mediate the binding to specific mitochondrial mRNAs. Interacts with the GTP-bound form of RAB5A (via its C-terminal region); linking the mRNP complex onto trafficking endosomes for active mRNA transport. Interacts with PPP1CA. Expressed at 16 dpc in the cortex (at protein level).

The protein localises to the early endosome. Its function is as follows. Component of the FERRY complex (Five-subunit Endosomal Rab5 and RNA/ribosome intermediary). The FERRY complex directly interacts with mRNAs and RAB5A, and functions as a RAB5A effector involved in the localization and the distribution of specific mRNAs most likely by mediating their endosomal transport. The complex recruits mRNAs and ribosomes to early endosomes through direct mRNA-interaction. In the complex, PPP1R21 serves as a binding hub connecting all five complex subunits and mediating the binding to mRNA and early endosomes via RAB5A. Putative regulator of protein phosphatase 1 (PP1) activity. May play a role in the endosomal sorting process or in endosome maturation pathway. The protein is Protein phosphatase 1 regulatory subunit 21 (Ppp1r21) of Mus musculus (Mouse).